The following is a 244-amino-acid chain: UPF0246 protein FMG_1068 (244 aa).

Belongs to the UPF0246 family.

The protein is UPF0246 protein FMG_1068 of Finegoldia magna (strain ATCC 29328 / DSM 20472 / WAL 2508) (Peptostreptococcus magnus).